Here is a 547-residue protein sequence, read N- to C-terminus: Probable pectinesterase/pectinesterase inhibitor 12 (547 aa).

The first 23 residues, 1 to 23 (MALSSFNLSSLLFLLFFTPSVFS), serve as a signal peptide directing secretion. A pectinesterase inhibitor 12 region spans residues 31-185 (NPHETSATSF…YKHISNSLSA (155 aa)). Residues N131, N247, N260, and N303 are each glycosylated (N-linked (GlcNAc...) asparagine). The pectinesterase 12 stretch occupies residues 237–533 (SLVVAADGTG…FTATEFITGD (297 aa)). Positions 312 and 342 each coordinate substrate. D365 functions as the Proton donor; for pectinesterase activity in the catalytic mechanism. Cysteines 379 and 399 form a disulfide. Residue D386 is the Nucleophile; for pectinesterase activity of the active site. 2 N-linked (GlcNAc...) asparagine glycosylation sites follow: N432 and N443. Residues R454 and W456 each contribute to the substrate site. N-linked (GlcNAc...) asparagine glycosylation occurs at N523.

The protein in the N-terminal section; belongs to the PMEI family. This sequence in the C-terminal section; belongs to the pectinesterase family. Expressed in siliques.

It is found in the secreted. Its subcellular location is the cell wall. It catalyses the reaction [(1-&gt;4)-alpha-D-galacturonosyl methyl ester](n) + n H2O = [(1-&gt;4)-alpha-D-galacturonosyl](n) + n methanol + n H(+). Its pathway is glycan metabolism; pectin degradation; 2-dehydro-3-deoxy-D-gluconate from pectin: step 1/5. Functionally, acts in the modification of cell walls via demethylesterification of cell wall pectin. This is Probable pectinesterase/pectinesterase inhibitor 12 (PME12) from Arabidopsis thaliana (Mouse-ear cress).